Reading from the N-terminus, the 254-residue chain is NAD-dependent glycerol dehydrogenase (254 aa).

18 to 47 (VVTGAASGIGKAMAELFSEKGAYVVLLDIK) is a binding site for NAD(+). Tyr160 (proton acceptor) is an active-site residue. Lys164 contributes to the NAD(+) binding site.

Belongs to the short-chain dehydrogenases/reductases (SDR) family. It depends on Mg(2+) as a cofactor. Requires Mn(2+) as cofactor.

Its subcellular location is the cytoplasm. The enzyme catalyses glycerol + NAD(+) = dihydroxyacetone + NADH + H(+). Its activity is regulated as follows. Inhibited by Zn(2+). In terms of biological role, involved in the glycerol metabolism. Catalyzes the NAD-dependent oxidation of glycerol to dihydroxyacetone (glycerone). GolD specifically uses NAD. This is NAD-dependent glycerol dehydrogenase from Listeria innocua serovar 6a (strain ATCC BAA-680 / CLIP 11262).